The primary structure comprises 222 residues: 7-cyano-7-deazaguanine synthase (222 aa).

11-21 (FSGGQDSTTCL) contributes to the ATP binding site. Cysteine 187, cysteine 195, cysteine 198, and cysteine 201 together coordinate Zn(2+).

This sequence belongs to the QueC family. Zn(2+) is required as a cofactor.

It carries out the reaction 7-carboxy-7-deazaguanine + NH4(+) + ATP = 7-cyano-7-deazaguanine + ADP + phosphate + H2O + H(+). It functions in the pathway purine metabolism; 7-cyano-7-deazaguanine biosynthesis. In terms of biological role, catalyzes the ATP-dependent conversion of 7-carboxy-7-deazaguanine (CDG) to 7-cyano-7-deazaguanine (preQ(0)). This chain is 7-cyano-7-deazaguanine synthase, found in Actinobacillus pleuropneumoniae serotype 7 (strain AP76).